The primary structure comprises 415 residues: Putative ankyrin repeat protein FPV034 (415 aa).

10 ANK repeats span residues 12-41, 43-72, 76-105, 107-135, 139-168, 170-200, 203-232, 237-266, 270-299, and 303-332; these read ICIKLLEQAIELKDYIVVRMILNQQENINT, KHFNMLRKAVLNHDHNLVNIFIDKNFNINI, VGYTLLRYAVEVDDVNIAKILLDAGSIINK, DYRLLHSAITHENKKMIELLCLHGININV, KGYTALYYTICNNNYDMVCFLLEKNADISI, NKYSMLHFLSTSNKYHNVMAVLLDKGIDVNI, HVKAPIHVAVERNNIYGTMLLINRNADVNI, GGRTSLHLAIKERNYEAAFVLINNGANVDS, VGNTPIFIAASLQDVRFMKLLLDNGADINV, and FGETPVNMVITGGSKEVTQYTVSYLISLKV.

This is Putative ankyrin repeat protein FPV034 (ANK2) from Fowlpox virus (strain NVSL) (FPV).